The primary structure comprises 295 residues: MILRRRGIVLSFHSNMVTVEDEETGERLLCKLRGKFRLQNLKIYVGDRVEYTPDGTGSGVIENVLHRKNLLVKPHVANVDQAILVVTVKMPETSTYIIDKFLVLTEKNELETVLVINKMDIYDEEDLEKVKELERIYSKLYPIVKTSAKTGMGIEELKKYLKGKISTMAGLSGVGKSSLLNAINPGLKLRVSEVSQKLQRGRHTTTSAQLLRFDFGGYVVDTPGFANLEIGDIEPEELKYYFKEFNEKQCFFSDCNHIDEPECGVKEAVENGEIAESRYENYVKMFHELLGRGKS.

The region spanning 68-228 is the CP-type G domain; that stretch reads KNLLVKPHVA…VVDTPGFANL (161 aa). GTP is bound by residues 117 to 120 and 170 to 178; these read NKMD and GLSGVGKSS. C250, C255, H257, and C263 together coordinate Zn(2+).

This sequence belongs to the TRAFAC class YlqF/YawG GTPase family. RsgA subfamily. As to quaternary structure, monomer. Associates with 30S ribosomal subunit, binds 16S rRNA. Requires Zn(2+) as cofactor.

The protein resides in the cytoplasm. Its function is as follows. One of several proteins that assist in the late maturation steps of the functional core of the 30S ribosomal subunit. Helps release RbfA from mature subunits. May play a role in the assembly of ribosomal proteins into the subunit. Circularly permuted GTPase that catalyzes slow GTP hydrolysis, GTPase activity is stimulated by the 30S ribosomal subunit. This is Small ribosomal subunit biogenesis GTPase RsgA from Thermotoga neapolitana (strain ATCC 49049 / DSM 4359 / NBRC 107923 / NS-E).